The primary structure comprises 131 residues: Synaptobrevin-like protein (131 aa).

At 1-81 (MLHITTMTDK…KRKFWWKNCK (81 aa)) the chain is on the cytoplasmic side. In terms of domain architecture, v-SNARE coiled-coil homology spans 18–78 (RLQQTQAQVN…GKLKRKFWWK (61 aa)). A helical; Anchor for type IV membrane protein transmembrane segment spans residues 82 to 102 (MLAVLGVLVVILIIVLIVWVV). Residues 103 to 131 (SEQKNKVEQSEHSSHHLVMDNSSHLLSEQ) lie on the Vesicular side of the membrane. The disordered stretch occupies residues 112–131 (SEHSSHHLVMDNSSHLLSEQ). The segment covering 122 to 131 (DNSSHLLSEQ) has biased composition (polar residues).

Belongs to the synaptobrevin family.

The protein localises to the cytoplasmic vesicle. The protein resides in the secretory vesicle. It localises to the synaptic vesicle membrane. Its subcellular location is the synapse. It is found in the synaptosome. Its function is as follows. Unknown, but synaptobrevins are presumed to be involved in targeting and fusion of synaptic vesicles with the presynaptic membrane as well as in neurotransmitter release. The chain is Synaptobrevin-like protein from Schistosoma mansoni (Blood fluke).